Reading from the N-terminus, the 196-residue chain is 3-isopropylmalate dehydratase small subunit (196 aa).

This sequence belongs to the LeuD family. LeuD type 1 subfamily. In terms of assembly, heterodimer of LeuC and LeuD.

The catalysed reaction is (2R,3S)-3-isopropylmalate = (2S)-2-isopropylmalate. It participates in amino-acid biosynthesis; L-leucine biosynthesis; L-leucine from 3-methyl-2-oxobutanoate: step 2/4. Its function is as follows. Catalyzes the isomerization between 2-isopropylmalate and 3-isopropylmalate, via the formation of 2-isopropylmaleate. The sequence is that of 3-isopropylmalate dehydratase small subunit from Streptococcus thermophilus (strain CNRZ 1066).